The sequence spans 138 residues: Mu-like prophage FluMu G protein 2 (138 aa).

This sequence to phage Mu protein G.

The chain is Mu-like prophage FluMu G protein 2 from Haemophilus influenzae (strain ATCC 51907 / DSM 11121 / KW20 / Rd).